Reading from the N-terminus, the 93-residue chain is Putative pterin-4-alpha-carbinolamine dehydratase (93 aa).

This sequence belongs to the pterin-4-alpha-carbinolamine dehydratase family.

It carries out the reaction (4aS,6R)-4a-hydroxy-L-erythro-5,6,7,8-tetrahydrobiopterin = (6R)-L-erythro-6,7-dihydrobiopterin + H2O. The sequence is that of Putative pterin-4-alpha-carbinolamine dehydratase from Synechococcus sp. (strain WH7803).